A 278-amino-acid polypeptide reads, in one-letter code: HTH-type transcriptional activator RhaS (278 aa).

The region spanning 174 to 272 (NQLMAWLEDH…NWSPRDIRQG (99 aa)) is the HTH araC/xylS-type domain. DNA-binding regions (H-T-H motif) lie at residues 191–212 (EAVA…KQHT) and 239–262 (VTEI…RREF).

Binds DNA as a dimer.

The protein resides in the cytoplasm. Functionally, activates expression of the rhaBAD and rhaT operons. The chain is HTH-type transcriptional activator RhaS from Salmonella paratyphi A (strain ATCC 9150 / SARB42).